Consider the following 339-residue polypeptide: DNA-directed RNA polymerase subunit alpha (339 aa).

The segment at 1 to 235 is alpha N-terminal domain (alpha-NTD); sequence MVLQKNWQSL…DQLQLFINFD (235 aa). An alpha C-terminal domain (alpha-CTD) region spans residues 251 to 339; it reads FNRNLLRKVD…DLAKRLDETF (89 aa).

The protein belongs to the RNA polymerase alpha chain family. As to quaternary structure, homodimer. The RNAP catalytic core consists of 2 alpha, 1 beta, 1 beta' and 1 omega subunit. When a sigma factor is associated with the core the holoenzyme is formed, which can initiate transcription.

It catalyses the reaction RNA(n) + a ribonucleoside 5'-triphosphate = RNA(n+1) + diphosphate. In terms of biological role, DNA-dependent RNA polymerase catalyzes the transcription of DNA into RNA using the four ribonucleoside triphosphates as substrates. The chain is DNA-directed RNA polymerase subunit alpha from Gluconobacter oxydans (strain 621H) (Gluconobacter suboxydans).